A 232-amino-acid polypeptide reads, in one-letter code: Phosphatidylserine decarboxylase proenzyme (232 aa).

S190 (schiff-base intermediate with substrate; via pyruvic acid) is an active-site residue. S190 carries the pyruvic acid (Ser); by autocatalysis modification.

The protein belongs to the phosphatidylserine decarboxylase family. PSD-A subfamily. Heterodimer of a large membrane-associated beta subunit and a small pyruvoyl-containing alpha subunit. Pyruvate serves as cofactor. In terms of processing, is synthesized initially as an inactive proenzyme. Formation of the active enzyme involves a self-maturation process in which the active site pyruvoyl group is generated from an internal serine residue via an autocatalytic post-translational modification. Two non-identical subunits are generated from the proenzyme in this reaction, and the pyruvate is formed at the N-terminus of the alpha chain, which is derived from the carboxyl end of the proenzyme. The post-translation cleavage follows an unusual pathway, termed non-hydrolytic serinolysis, in which the side chain hydroxyl group of the serine supplies its oxygen atom to form the C-terminus of the beta chain, while the remainder of the serine residue undergoes an oxidative deamination to produce ammonia and the pyruvoyl prosthetic group on the alpha chain.

The protein resides in the cell membrane. It carries out the reaction a 1,2-diacyl-sn-glycero-3-phospho-L-serine + H(+) = a 1,2-diacyl-sn-glycero-3-phosphoethanolamine + CO2. It participates in phospholipid metabolism; phosphatidylethanolamine biosynthesis; phosphatidylethanolamine from CDP-diacylglycerol: step 2/2. Its function is as follows. Catalyzes the formation of phosphatidylethanolamine (PtdEtn) from phosphatidylserine (PtdSer). This chain is Phosphatidylserine decarboxylase proenzyme, found in Rhodopseudomonas palustris (strain BisA53).